A 299-amino-acid polypeptide reads, in one-letter code: Regucalcin (299 aa).

A divalent metal cation is bound at residue E18. R101, N103, and E121 together coordinate substrate. An N6-succinyllysine modification is found at K144. Positions 154 and 204 each coordinate a divalent metal cation. The active-site Proton donor/acceptor is the D204. 2 positions are modified to N6-succinyllysine: K244 and K253. Position 268 is a phosphoserine (S268).

The protein belongs to the SMP-30/CGR1 family. As to quaternary structure, monomer. Zn(2+) serves as cofactor. Requires Mn(2+) as cofactor. Ca(2+) is required as a cofactor. It depends on Mg(2+) as a cofactor. The cofactor is Co(2+). In terms of processing, the N-terminus is blocked. As to expression, detected in liver (at protein level). Hepatocytes and renal proximal tubular epithelium.

Its subcellular location is the cytoplasm. The enzyme catalyses D-glucono-1,5-lactone + H2O = D-gluconate + H(+). It functions in the pathway cofactor biosynthesis; L-ascorbate biosynthesis via UDP-alpha-D-glucuronate pathway; L-ascorbate from UDP-alpha-D-glucuronate: step 3/4. Functionally, gluconolactonase with low activity towards other sugar lactones, including gulonolactone and galactonolactone. Catalyzes a key step in ascorbic acid (vitamin C) biosynthesis. Can also hydrolyze diisopropyl phosphorofluoridate and phenylacetate (in vitro). Calcium-binding protein. Modulates Ca(2+) signaling, and Ca(2+)-dependent cellular processes and enzyme activities. In Rattus norvegicus (Rat), this protein is Regucalcin (Rgn).